The following is a 292-amino-acid chain: Acetyl-coenzyme A carboxylase carboxyl transferase subunit beta (292 aa).

The CoA carboxyltransferase N-terminal domain maps to 36–292 (MWSKCEKCAK…LLRMHEVDYE (257 aa)). Zn(2+)-binding residues include Cys-40, Cys-43, Cys-59, and Cys-62. The C4-type zinc finger occupies 40–62 (CEKCAKILYTEDLRENFNVCPNC).

It belongs to the AccD/PCCB family. Acetyl-CoA carboxylase is a heterohexamer composed of biotin carboxyl carrier protein (AccB), biotin carboxylase (AccC) and two subunits each of ACCase subunit alpha (AccA) and ACCase subunit beta (AccD). Requires Zn(2+) as cofactor.

It is found in the cytoplasm. The enzyme catalyses N(6)-carboxybiotinyl-L-lysyl-[protein] + acetyl-CoA = N(6)-biotinyl-L-lysyl-[protein] + malonyl-CoA. It participates in lipid metabolism; malonyl-CoA biosynthesis; malonyl-CoA from acetyl-CoA: step 1/1. Its function is as follows. Component of the acetyl coenzyme A carboxylase (ACC) complex. Biotin carboxylase (BC) catalyzes the carboxylation of biotin on its carrier protein (BCCP) and then the CO(2) group is transferred by the transcarboxylase to acetyl-CoA to form malonyl-CoA. This chain is Acetyl-coenzyme A carboxylase carboxyl transferase subunit beta, found in Clostridium perfringens (strain ATCC 13124 / DSM 756 / JCM 1290 / NCIMB 6125 / NCTC 8237 / Type A).